The following is a 745-amino-acid chain: Photosystem I P700 chlorophyll a apoprotein A2 (745 aa).

Transmembrane regions (helical) follow at residues 49–72 (LFAT…FHIA), 138–161 (LYAG…LHLQ), 178–202 (LNHH…HVAI), 276–294 (MAHH…GHMY), 338–361 (LHFQ…QHMY), 377–403 (AALY…IFLV), 425–447 (AIIS…LYVH), and 528–546 (FLVH…LILV). The [4Fe-4S] cluster site is built by Cys-570 and Cys-579. 2 helical membrane-spanning segments follow: residues 586 to 607 (AFYL…YWHW) and 654 to 676 (LAVW…MFLI). Residues His-665, Met-673, and Tyr-681 each contribute to the chlorophyll a site. Residue Trp-682 coordinates phylloquinone. The helical transmembrane segment at 718-738 (LVGLAHFTVGYVLTYAAFVIA) threads the bilayer.

The protein belongs to the PsaA/PsaB family. In terms of assembly, the PsaA/B heterodimer binds the P700 chlorophyll special pair and subsequent electron acceptors. PSI consists of a core antenna complex that captures photons, and an electron transfer chain that converts photonic excitation into a charge separation. The cyanobacterial PSI reaction center is composed of one copy each of PsaA,B,C,D,E,F,I,J,K,L,M and X, and forms trimeric complexes. PSI electron transfer chain: 5 chlorophyll a, 1 chlorophyll a', 2 phylloquinones and 3 4Fe-4S clusters. PSI core antenna: 90 chlorophyll a, 22 carotenoids, 3 phospholipids and 1 galactolipid. P700 is a chlorophyll a/chlorophyll a' dimer, A0 is one or more chlorophyll a, A1 is one or both phylloquinones and FX is a shared 4Fe-4S iron-sulfur center. serves as cofactor.

It is found in the cellular thylakoid membrane. It catalyses the reaction reduced [plastocyanin] + hnu + oxidized [2Fe-2S]-[ferredoxin] = oxidized [plastocyanin] + reduced [2Fe-2S]-[ferredoxin]. Its function is as follows. PsaA and PsaB bind P700, the primary electron donor of photosystem I (PSI), as well as the electron acceptors A0, A1 and FX. PSI is a plastocyanin/cytochrome c6-ferredoxin oxidoreductase, converting photonic excitation into a charge separation, which transfers an electron from the donor P700 chlorophyll pair to the spectroscopically characterized acceptors A0, A1, FX, FA and FB in turn. Oxidized P700 is reduced on the lumenal side of the thylakoid membrane by plastocyanin or cytochrome c6. In Synechococcus sp. (strain JA-3-3Ab) (Cyanobacteria bacterium Yellowstone A-Prime), this protein is Photosystem I P700 chlorophyll a apoprotein A2.